We begin with the raw amino-acid sequence, 677 residues long: DNA ligase (677 aa).

NAD(+) contacts are provided by residues aspartate 34–aspartate 38, serine 83–leucine 84, and glutamate 115. Lysine 117 (N6-AMP-lysine intermediate) is an active-site residue. Positions 138, 180, 297, and 321 each coordinate NAD(+). Zn(2+)-binding residues include cysteine 416, cysteine 419, cysteine 434, and cysteine 439. One can recognise a BRCT domain in the interval lysine 596–alanine 677.

The protein belongs to the NAD-dependent DNA ligase family. LigA subfamily. It depends on Mg(2+) as a cofactor. Mn(2+) is required as a cofactor.

It catalyses the reaction NAD(+) + (deoxyribonucleotide)n-3'-hydroxyl + 5'-phospho-(deoxyribonucleotide)m = (deoxyribonucleotide)n+m + AMP + beta-nicotinamide D-nucleotide.. In terms of biological role, DNA ligase that catalyzes the formation of phosphodiester linkages between 5'-phosphoryl and 3'-hydroxyl groups in double-stranded DNA using NAD as a coenzyme and as the energy source for the reaction. It is essential for DNA replication and repair of damaged DNA. The chain is DNA ligase from Acidobacterium capsulatum (strain ATCC 51196 / DSM 11244 / BCRC 80197 / JCM 7670 / NBRC 15755 / NCIMB 13165 / 161).